The chain runs to 289 residues: Xylosylprotein 4-beta-galactosyltransferase (289 aa).

The Cytoplasmic segment spans residues 1 to 6; that stretch reads MKLKTR. A helical; Signal-anchor for type II membrane protein transmembrane segment spans residues 7 to 27; that stretch reads LILSGTILISLAACYFLVLLV. Residues 28–289 are Lumenal-facing; the sequence is LDLEITRDLM…DLNWTPYCKS (262 aa). 58 to 62 contributes to the UDP-alpha-D-galactose binding site; sequence PYRDR. Asparagine 81 and asparagine 90 each carry an N-linked (GlcNAc...) asparagine glycan. Residues 97-99, 123-124, tyrosine 154, and tryptophan 184 each bind UDP-alpha-D-galactose; these read FNR and VD. Aspartate 124 contacts Mn(2+). 186 to 189 is an N-acetyl-D-glucosamine binding site; the sequence is LEDD. N-linked (GlcNAc...) asparagine glycosylation occurs at asparagine 201. The tract at residues 214–236 is disordered; the sequence is NTFRHIHGPKRKRDYTPKKNDKN. The span at 217 to 226 shows a compositional bias: basic residues; sequence RHIHGPKRKR. A Mn(2+)-binding site is contributed by histidine 218. 218–220 provides a ligand contact to UDP-alpha-D-galactose; that stretch reads HIH. Over residues 227–236 the composition is skewed to basic and acidic residues; the sequence is DYTPKKNDKN.

It belongs to the glycosyltransferase 7 family. Mn(2+) is required as a cofactor.

The protein localises to the membrane. The enzyme catalyses 3-O-(beta-D-xylosyl)-L-seryl-[protein] + UDP-alpha-D-galactose = 3-O-(beta-D-galactosyl-(1-&gt;4)-beta-D-xylosyl)-L-seryl-[protein] + UDP + H(+). Its pathway is protein modification; protein glycosylation. Glycosyltransferase required for the biosynthesis of the tetrasaccharide (GlcA-Gal-Gal-Xyl-)Ser core linker of heparan sulfate and chondroitin sulfate. Required for embryonic development. Involved in vulval epithelium invagination. Required for axon regeneration after injury. The sequence is that of Xylosylprotein 4-beta-galactosyltransferase (sqv-3) from Caenorhabditis elegans.